A 56-amino-acid polypeptide reads, in one-letter code: UPF0434 protein WIGBR2520 (56 aa).

This sequence belongs to the UPF0434 family.

This is UPF0434 protein WIGBR2520 from Wigglesworthia glossinidia brevipalpis.